A 379-amino-acid chain; its full sequence is Homoserine O-succinyltransferase (379 aa).

Residues 51–360 form the AB hydrolase-1 domain; it reads NAVLICHALS…DAPQGHDAFL (310 aa). Ser157 (nucleophile) is an active-site residue. Arg227 lines the substrate pocket. Active-site residues include Asp323 and His356. Asp357 serves as a coordination point for substrate.

This sequence belongs to the AB hydrolase superfamily. MetX family. As to quaternary structure, homodimer.

The protein resides in the cytoplasm. The catalysed reaction is L-homoserine + succinyl-CoA = O-succinyl-L-homoserine + CoA. It functions in the pathway amino-acid biosynthesis; L-methionine biosynthesis via de novo pathway; O-succinyl-L-homoserine from L-homoserine: step 1/1. Functionally, transfers a succinyl group from succinyl-CoA to L-homoserine, forming succinyl-L-homoserine. This Pseudomonas fluorescens (strain Pf0-1) protein is Homoserine O-succinyltransferase.